A 354-amino-acid polypeptide reads, in one-letter code: S-adenosylmethionine:tRNA ribosyltransferase-isomerase (354 aa).

The protein belongs to the QueA family. As to quaternary structure, monomer.

The protein resides in the cytoplasm. The catalysed reaction is 7-aminomethyl-7-carbaguanosine(34) in tRNA + S-adenosyl-L-methionine = epoxyqueuosine(34) in tRNA + adenine + L-methionine + 2 H(+). The protein operates within tRNA modification; tRNA-queuosine biosynthesis. Functionally, transfers and isomerizes the ribose moiety from AdoMet to the 7-aminomethyl group of 7-deazaguanine (preQ1-tRNA) to give epoxyqueuosine (oQ-tRNA). The chain is S-adenosylmethionine:tRNA ribosyltransferase-isomerase from Salmonella heidelberg (strain SL476).